We begin with the raw amino-acid sequence, 486 residues long: Cardiolipin synthase A (486 aa).

The next 2 helical transmembrane spans lie at 3–23 (TFYT…IASV) and 38–58 (MAWL…YLSF). PLD phosphodiesterase domains follow at residues 219–246 (MDLR…VDPR) and 399–426 (EGGL…DMRS). Active-site residues include H224, K226, D231, H404, K406, and D411.

It belongs to the phospholipase D family. Cardiolipin synthase subfamily. ClsA sub-subfamily.

It localises to the cell inner membrane. It carries out the reaction 2 a 1,2-diacyl-sn-glycero-3-phospho-(1'-sn-glycerol) = a cardiolipin + glycerol. In terms of biological role, catalyzes the reversible phosphatidyl group transfer from one phosphatidylglycerol molecule to another to form cardiolipin (CL) (diphosphatidylglycerol) and glycerol. This is Cardiolipin synthase A from Edwardsiella ictaluri (strain 93-146).